Here is a 342-residue protein sequence, read N- to C-terminus: Isopentenyl-diphosphate delta-isomerase (342 aa).

11–12 (RK) lines the substrate pocket. FMN-binding positions include Ser68, 69 to 71 (SMT), Ser99, and Asn128. 99-101 (SQR) is a substrate binding site. Gln162 contacts substrate. Glu163 is a binding site for Mg(2+). Residues Lys194, Ser219, Thr224, 275–277 (GVR), and 296–297 (AK) contribute to the FMN site.

It belongs to the IPP isomerase type 2 family. As to quaternary structure, homooctamer. Dimer of tetramers. It depends on FMN as a cofactor. NADPH is required as a cofactor. Mg(2+) serves as cofactor.

It is found in the cytoplasm. The enzyme catalyses isopentenyl diphosphate = dimethylallyl diphosphate. Involved in the biosynthesis of isoprenoids. Catalyzes the 1,3-allylic rearrangement of the homoallylic substrate isopentenyl (IPP) to its allylic isomer, dimethylallyl diphosphate (DMAPP). The protein is Isopentenyl-diphosphate delta-isomerase of Legionella pneumophila (strain Paris).